Reading from the N-terminus, the 247-residue chain is Anionic trypsin (247 aa).

The signal sequence occupies residues Met1–Ala15. Positions Phe16 to Lys23 are cleaved as a propeptide — activation peptide. The Peptidase S1 domain maps to Ile24–Ala244. Intrachain disulfides connect Cys30–Cys160, Cys48–Cys64, Cys132–Cys233, Cys139–Cys206, Cys171–Cys185, and Cys196–Cys220. The active-site Charge relay system is the His63. 4 residues coordinate Ca(2+): Glu75, Asn77, Val80, and Glu85. Asp107 serves as the catalytic Charge relay system. Ser200 (charge relay system) is an active-site residue.

This sequence belongs to the peptidase S1 family. The cofactor is Ca(2+). Not sulfated on tyrosine residue(s).

The protein resides in the secreted. Its subcellular location is the extracellular space. The enzyme catalyses Preferential cleavage: Arg-|-Xaa, Lys-|-Xaa.. The sequence is that of Anionic trypsin from Bos taurus (Bovine).